A 106-amino-acid chain; its full sequence is ATP-dependent Clp protease adapter protein ClpS (106 aa).

This sequence belongs to the ClpS family. In terms of assembly, binds to the N-terminal domain of the chaperone ClpA.

Functionally, involved in the modulation of the specificity of the ClpAP-mediated ATP-dependent protein degradation. This is ATP-dependent Clp protease adapter protein ClpS from Salmonella gallinarum (strain 287/91 / NCTC 13346).